The chain runs to 398 residues: Ubiquitin-like modifier-activating enzyme 5 (398 aa).

ATP contacts are provided by glycine 76, aspartate 97, lysine 120, asparagine 143, and asparagine 177. Zn(2+)-binding residues include cysteine 219 and cysteine 222. Cysteine 243 (glycyl thioester intermediate) is an active-site residue. Zn(2+)-binding residues include cysteine 296 and cysteine 301.

This sequence belongs to the ubiquitin-activating E1 family. UBA5 subfamily.

Functionally, E1-like enzyme which activates UFM1. The chain is Ubiquitin-like modifier-activating enzyme 5 from Drosophila grimshawi (Hawaiian fruit fly).